The sequence spans 190 residues: Peptidyl-tRNA hydrolase (190 aa).

Tyrosine 14 provides a ligand contact to tRNA. Histidine 19 (proton acceptor) is an active-site residue. Positions 63, 65, and 112 each coordinate tRNA.

This sequence belongs to the PTH family. In terms of assembly, monomer.

The protein localises to the cytoplasm. The catalysed reaction is an N-acyl-L-alpha-aminoacyl-tRNA + H2O = an N-acyl-L-amino acid + a tRNA + H(+). Its function is as follows. Hydrolyzes ribosome-free peptidyl-tRNAs (with 1 or more amino acids incorporated), which drop off the ribosome during protein synthesis, or as a result of ribosome stalling. In terms of biological role, catalyzes the release of premature peptidyl moieties from peptidyl-tRNA molecules trapped in stalled 50S ribosomal subunits, and thus maintains levels of free tRNAs and 50S ribosomes. The polypeptide is Peptidyl-tRNA hydrolase (Kosmotoga olearia (strain ATCC BAA-1733 / DSM 21960 / TBF 19.5.1)).